Here is a 723-residue protein sequence, read N- to C-terminus: Fatty acid oxidation complex subunit alpha (723 aa).

The enoyl-CoA hydratase/isomerase stretch occupies residues 1 to 189; it reads MIYQANTLQV…KVGLLDAIVE (189 aa). Residue D296 participates in substrate binding. The tract at residues 311 to 723 is 3-hydroxyacyl-CoA dehydrogenase; sequence NKATERAAVL…FYDGQQASSL (413 aa). Residues M325, D344, 401–403, K408, and S430 each bind NAD(+); that span reads VVE. Residue H451 is the For 3-hydroxyacyl-CoA dehydrogenase activity of the active site. N454 provides a ligand contact to NAD(+). Substrate contacts are provided by N501 and Y661.

This sequence in the N-terminal section; belongs to the enoyl-CoA hydratase/isomerase family. In the C-terminal section; belongs to the 3-hydroxyacyl-CoA dehydrogenase family. Heterotetramer of two alpha chains (FadB) and two beta chains (FadA).

The enzyme catalyses a (3S)-3-hydroxyacyl-CoA + NAD(+) = a 3-oxoacyl-CoA + NADH + H(+). The catalysed reaction is a (3S)-3-hydroxyacyl-CoA = a (2E)-enoyl-CoA + H2O. It carries out the reaction a 4-saturated-(3S)-3-hydroxyacyl-CoA = a (3E)-enoyl-CoA + H2O. It catalyses the reaction (3S)-3-hydroxybutanoyl-CoA = (3R)-3-hydroxybutanoyl-CoA. The enzyme catalyses a (3Z)-enoyl-CoA = a 4-saturated (2E)-enoyl-CoA. The catalysed reaction is a (3E)-enoyl-CoA = a 4-saturated (2E)-enoyl-CoA. It participates in lipid metabolism; fatty acid beta-oxidation. Involved in the aerobic and anaerobic degradation of long-chain fatty acids via beta-oxidation cycle. Catalyzes the formation of 3-oxoacyl-CoA from enoyl-CoA via L-3-hydroxyacyl-CoA. It can also use D-3-hydroxyacyl-CoA and cis-3-enoyl-CoA as substrate. The protein is Fatty acid oxidation complex subunit alpha of Vibrio atlanticus (strain LGP32) (Vibrio splendidus (strain Mel32)).